The sequence spans 360 residues: DNA replication and repair protein RecF (360 aa).

Position 33–40 (33–40 (GENGSGKT)) interacts with ATP.

The protein belongs to the RecF family.

The protein resides in the cytoplasm. Its function is as follows. The RecF protein is involved in DNA metabolism; it is required for DNA replication and normal SOS inducibility. RecF binds preferentially to single-stranded, linear DNA. It also seems to bind ATP. The polypeptide is DNA replication and repair protein RecF (Rickettsia conorii (strain ATCC VR-613 / Malish 7)).